The chain runs to 868 residues: DNA mismatch repair protein MutS (868 aa).

620 to 627 (GPNMGGKS) contacts ATP.

The protein belongs to the DNA mismatch repair MutS family.

Functionally, this protein is involved in the repair of mismatches in DNA. It is possible that it carries out the mismatch recognition step. This protein has a weak ATPase activity. The chain is DNA mismatch repair protein MutS from Desulforamulus reducens (strain ATCC BAA-1160 / DSM 100696 / MI-1) (Desulfotomaculum reducens).